The primary structure comprises 62 residues: Alpha-conotoxin-like Qc1.2 (62 aa).

The first 21 residues, methionine 1–serine 21, serve as a signal peptide directing secretion. Residues phenylalanine 22–lysine 48 constitute a propeptide that is removed on maturation. Glutamine 49 bears the Pyrrolidone carboxylic acid mark. Disulfide bonds link cysteine 50/cysteine 56 and cysteine 51/cysteine 61.

The protein belongs to the conotoxin A superfamily. As to expression, expressed by the venom duct.

The protein resides in the secreted. Functionally, alpha-conotoxins bind to the nicotinic acetylcholine receptors (nAChR) and inhibit them. This synthetic peptide (10 uM) selectively, but weakly inhibits both rat neuronal alpha-3-beta-2/CHRNA3-CHRNB2 (63%) and alpha-3-beta-4/CHRNA3-CHRNB4 (37%) subtypes of nAChR. This is Alpha-conotoxin-like Qc1.2 from Conus quercinus (Oak cone).